Consider the following 212-residue polypeptide: Protein-L-isoaspartate O-methyltransferase (212 aa).

Ser-56 is a catalytic residue.

It belongs to the methyltransferase superfamily. L-isoaspartyl/D-aspartyl protein methyltransferase family.

It localises to the cytoplasm. The catalysed reaction is [protein]-L-isoaspartate + S-adenosyl-L-methionine = [protein]-L-isoaspartate alpha-methyl ester + S-adenosyl-L-homocysteine. In terms of biological role, catalyzes the methyl esterification of L-isoaspartyl residues in peptides and proteins that result from spontaneous decomposition of normal L-aspartyl and L-asparaginyl residues. It plays a role in the repair and/or degradation of damaged proteins. The chain is Protein-L-isoaspartate O-methyltransferase from Myxococcus xanthus (strain DK1622).